A 201-amino-acid chain; its full sequence is Small ribosomal subunit protein uS4 (201 aa).

The region spanning 93–153 (QRLDNIVYRL…EKSKNLVIIK (61 aa)) is the S4 RNA-binding domain.

It belongs to the universal ribosomal protein uS4 family. Part of the 30S ribosomal subunit. Contacts protein S5. The interaction surface between S4 and S5 is involved in control of translational fidelity.

In terms of biological role, one of the primary rRNA binding proteins, it binds directly to 16S rRNA where it nucleates assembly of the body of the 30S subunit. With S5 and S12 plays an important role in translational accuracy. The chain is Small ribosomal subunit protein uS4 from Latilactobacillus sakei subsp. sakei (strain 23K) (Lactobacillus sakei subsp. sakei).